The following is a 387-amino-acid chain: S-adenosylmethionine synthase (387 aa).

Position 19 (histidine 19) interacts with ATP. Aspartate 21 provides a ligand contact to Mg(2+). A K(+)-binding site is contributed by glutamate 47. Glutamine 103 is a binding site for L-methionine. The tract at residues 103–113 is flexible loop; the sequence is QSPDIAQGVEL. ATP contacts are provided by residues 167 to 169, 233 to 234, aspartate 242, 248 to 249, alanine 265, and lysine 269; these read DMK, RF, and RK. Aspartate 242 provides a ligand contact to L-methionine. Lysine 273 provides a ligand contact to L-methionine.

It belongs to the AdoMet synthase family. Homotetramer; dimer of dimers. It depends on Mg(2+) as a cofactor. K(+) is required as a cofactor.

The protein resides in the cytoplasm. The enzyme catalyses L-methionine + ATP + H2O = S-adenosyl-L-methionine + phosphate + diphosphate. Its pathway is amino-acid biosynthesis; S-adenosyl-L-methionine biosynthesis; S-adenosyl-L-methionine from L-methionine: step 1/1. In terms of biological role, catalyzes the formation of S-adenosylmethionine (AdoMet) from methionine and ATP. The overall synthetic reaction is composed of two sequential steps, AdoMet formation and the subsequent tripolyphosphate hydrolysis which occurs prior to release of AdoMet from the enzyme. The protein is S-adenosylmethionine synthase of Mycoplasma mycoides subsp. mycoides SC (strain CCUG 32753 / NCTC 10114 / PG1).